The sequence spans 279 residues: Prohibitin-4, mitochondrial (279 aa).

G2 bears the N-acetylglycine mark. The Mitochondrial matrix segment spans residues G2 to V6. Residues A7–L28 traverse the membrane as a helical; Signal-anchor for type II membrane protein segment. At N29–R279 the chain is on the mitochondrial intermembrane side.

It belongs to the prohibitin family. Component of a prohibitin multimeric complex in mitochondrial membranes. In terms of tissue distribution, mostly expressed in proliferative tissues, including vasculature, shoot and root apical tissues. Accumulates in dry seeds.

It is found in the mitochondrion inner membrane. Its function is as follows. Prohibitin probably acts as a holdase/unfoldase for the stabilization of newly synthesized mitochondrial proteins. In Arabidopsis thaliana (Mouse-ear cress), this protein is Prohibitin-4, mitochondrial (PHB4).